Reading from the N-terminus, the 183-residue chain is Histone deacetylase complex subunit SAP30L (183 aa).

M1 is modified (N-acetylmethionine). Acidic residues predominate over residues 1 to 10 (MNGFSTEEDS). Residues 1-23 (MNGFSTEEDSREGPPAAPAAAAP) are disordered. Cystine bridges form between C29-C30 and C38-C74. The Atypical zinc finger occupies 29 to 77 (CCLIEDGERCVRPAGNASFSKRVQKSISQKKLKLDIDKSVRHLYICDFH). K49 participates in a covalent cross-link: Glycyl lysine isopeptide (Lys-Gly) (interchain with G-Cter in SUMO2). Residues 85 to 105 (RNKRKRKTSDDGGDSPEHDTD) form a disordered region. Residues 86-91 (NKRKRK) carry the Nuclear localization signal (NLS) motif. The important for DNA and phosphoinositide binding stretch occupies residues 88-90 (RKR). T92 bears the Phosphothreonine mark. S93 and S99 each carry phosphoserine. A Phosphothreonine modification is found at T104. Residues K155, K166, and K175 each participate in a glycyl lysine isopeptide (Lys-Gly) (interchain with G-Cter in SUMO2) cross-link.

This sequence belongs to the SAP30 family. As to quaternary structure, interacts with components of the histone deacetylase complex SIN3A, HDAC1 and HDAC2. Binds histones and nucleosomes. Interacts with FEZ1. Detected in brain and ovary, and at lower levels in heart, small intestine, lung, kidney, skeletal muscle, stomach and spleen (at protein level). Ubiquitous; expressed in all tissues tested with highest levels in testis.

Its subcellular location is the nucleus. It localises to the nucleolus. Functionally, functions as a transcription repressor, probably via its interaction with histone deacetylase complexes. Involved in the functional recruitment of the class 1 Sin3-histone deacetylase complex (HDAC) to the nucleolus. Binds DNA, apparently without sequence-specificity, and bends bound double-stranded DNA. Binds phosphoinositol phosphates (phosphoinositol 3-phosphate, phosphoinositol 4-phosphate and phosphoinositol 5-phosphate) via the same basic sequence motif that mediates DNA binding and nuclear import. In terms of biological role, functions as a transcription repressor; isoform 2 has lower transcription repressor activity than isoform 1 and isoform 3. Its function is as follows. Functions as a transcription repressor; its activity is marginally lower than that of isoform 1. In Homo sapiens (Human), this protein is Histone deacetylase complex subunit SAP30L (SAP30L).